The chain runs to 440 residues: Gamma-aminobutyric acid receptor subunit pi (440 aa).

The N-terminal stretch at 1-23 is a signal peptide; sequence MSYSLYLAFVCLNLLAQRMCIQG. The Extracellular portion of the chain corresponds to 24–241; it reads NQFNVEVSRS…LVLQFELRRN (218 aa). Asn43, Asn102, and Asn145 each carry an N-linked (GlcNAc...) asparagine glycan. A disulfide bond links Cys160 and Cys174. N-linked (GlcNAc...) asparagine glycans are attached at residues Asn196 and Asn228. The chain crosses the membrane as a helical span at residues 242 to 262; that stretch reads VLYFILETYVPSTFLVVLSWV. Residues 263–270 lie on the Cytoplasmic side of the membrane; that stretch reads SFWISLES. A helical transmembrane segment spans residues 271–290; sequence VPARTCIGVTTVLSMTTLMI. Residues 291-301 lie on the Extracellular side of the membrane; sequence GSRTSLPNTNC. A helical transmembrane segment spans residues 302 to 322; the sequence is FIKAIDVYLGICFSFVFGALL. The Cytoplasmic segment spans residues 323-419; that stretch reads EYAVAHYSSL…NPSNVDRYSK (97 aa). A helical transmembrane segment spans residues 420 to 440; the sequence is LLFPLIFMLANVFYWAYYMYF.

This sequence belongs to the ligand-gated ion channel (TC 1.A.9) family. Gamma-aminobutyric acid receptor (TC 1.A.9.5) subfamily. GABRP sub-subfamily. As to quaternary structure, heteropentamer, formed by a combination of alpha (GABRA1-6), beta (GABRB1-3), gamma (GABRG1-3), delta (GABRD), epsilon (GABRE), rho (GABRR1-3), pi (GABRP) and theta (GABRQ) chains, each subunit exhibiting distinct physiological and pharmacological properties. As to expression, expressed in lungs, in alveolar epithelium.

It localises to the cell membrane. Its subcellular location is the apical cell membrane. It carries out the reaction chloride(in) = chloride(out). Its function is as follows. Pi subunit of the heteropentameric ligand-gated chloride channel gated by gamma-aminobutyric acid (GABA). GABA-gated chloride channels, also named GABA(A) receptors (GABAAR), consist of five subunits arranged around a central pore and contain GABA active binding site(s) located at the alpha and beta subunit interfaces. When activated by GABA, GABAARs selectively allow the flow of chloride anions across the cell membrane down their electrochemical gradient. Pi-containing GABAARs are mostly located in peripheral tissues. In the uterus, pi subunits modulate uterus contraction by altering the sensitivity of GABAARs to pregnanolone. In the lungs, pi-containing GABAARs contribute to pulmonary fluid transport via luminal secretion of chloride. This Rattus norvegicus (Rat) protein is Gamma-aminobutyric acid receptor subunit pi.